The primary structure comprises 116 residues: Transcription initiation factor IIA subunit 2 (116 aa).

It belongs to the TFIIA subunit 2 family. In terms of assembly, TFIIA is a heterodimer composed of the large TOA1 and the small TOA2 subunits.

It is found in the nucleus. In terms of biological role, TFIIA is a component of the transcription machinery of RNA polymerase II and plays an important role in transcriptional activation. TFIIA in a complex with tbp mediates transcriptional activity. The polypeptide is Transcription initiation factor IIA subunit 2 (TOA2) (Pyricularia oryzae (strain 70-15 / ATCC MYA-4617 / FGSC 8958) (Rice blast fungus)).